A 437-amino-acid polypeptide reads, in one-letter code: Nicotinate phosphoribosyltransferase (437 aa).

Residue H231 is modified to Phosphohistidine; by autocatalysis.

Belongs to the NAPRTase family. In terms of processing, transiently phosphorylated on a His residue during the reaction cycle. Phosphorylation strongly increases the affinity for substrates and increases the rate of nicotinate D-ribonucleotide production. Dephosphorylation regenerates the low-affinity form of the enzyme, leading to product release.

The catalysed reaction is nicotinate + 5-phospho-alpha-D-ribose 1-diphosphate + ATP + H2O = nicotinate beta-D-ribonucleotide + ADP + phosphate + diphosphate. It participates in cofactor biosynthesis; NAD(+) biosynthesis; nicotinate D-ribonucleotide from nicotinate: step 1/1. Catalyzes the synthesis of beta-nicotinate D-ribonucleotide from nicotinate and 5-phospho-D-ribose 1-phosphate at the expense of ATP. This is Nicotinate phosphoribosyltransferase from Vibrio vulnificus (strain YJ016).